The chain runs to 195 residues: MTQPPASTSGIMGTLSSWNLKILQINQLHLVHWNAVKFENFEDAALEENGLAVIGVFLKISETSGSPVSTGRPKPLARKLRPAQKHWVLQSRPFLSSQVQENCKVTYFHRKHWVRIRPLRTTPPSWDYTRICIQREMVPARIRVLREMVPEAWRCFPNRLPLLSNIRPDFSKAPLAYVKRWLWTARHPHSLSAAW.

121–122 (TT) serves as a coordination point for substrate.

Belongs to the alpha-carbonic anhydrase family.

This Homo sapiens (Human) protein is Putative inactive carbonic anhydrase 5B-like protein (CA5BP1).